We begin with the raw amino-acid sequence, 119 residues long: Large ribosomal subunit protein bL20 (119 aa).

The protein belongs to the bacterial ribosomal protein bL20 family.

Binds directly to 23S ribosomal RNA and is necessary for the in vitro assembly process of the 50S ribosomal subunit. It is not involved in the protein synthesizing functions of that subunit. This is Large ribosomal subunit protein bL20 from Xanthomonas campestris pv. campestris (strain 8004).